Reading from the N-terminus, the 150-residue chain is UPF0208 membrane protein VC_1099 (150 aa).

Transmembrane regions (helical) follow at residues 42-62 (FAIK…MVFA) and 70-90 (AIVV…WLGH).

It belongs to the UPF0208 family.

It localises to the cell inner membrane. This is UPF0208 membrane protein VC_1099 from Vibrio cholerae serotype O1 (strain ATCC 39315 / El Tor Inaba N16961).